The chain runs to 652 residues: Fimbrin-4 (652 aa).

Calponin-homology (CH) domains lie at 116–233 (ESEK…KIQL), 261–364 (LAPE…HHRN), 388–494 (SREE…RYTM), and 509–617 (DITE…NWSL). Actin-binding stretches follow at residues 116–364 (ESEK…HHRN) and 388–617 (SREE…NWSL). A disordered region spans residues 623-652 (TESTVSDDTDVSSVTEEISNLSTDDGSSDV). Residues 640–652 (ISNLSTDDGSSDV) are compositionally biased toward polar residues.

As to quaternary structure, interacts with F-actin.

It localises to the cytoplasm. It is found in the cytoskeleton. Functionally, cross-links actin filaments (F-actin). Stabilizes and prevents F-actin depolymerization mediated by profilin. May regulate actin cytoarchitecture, cell cycle, cell division, cell elongation and cytoplasmic tractus. The sequence is that of Fimbrin-4 from Arabidopsis thaliana (Mouse-ear cress).